The chain runs to 96 residues: Co-chaperonin GroES (96 aa).

The protein belongs to the GroES chaperonin family. As to quaternary structure, heptamer of 7 subunits arranged in a ring. Interacts with the chaperonin GroEL.

It is found in the cytoplasm. In terms of biological role, together with the chaperonin GroEL, plays an essential role in assisting protein folding. The GroEL-GroES system forms a nano-cage that allows encapsulation of the non-native substrate proteins and provides a physical environment optimized to promote and accelerate protein folding. GroES binds to the apical surface of the GroEL ring, thereby capping the opening of the GroEL channel. The chain is Co-chaperonin GroES from Polynucleobacter asymbioticus (strain DSM 18221 / CIP 109841 / QLW-P1DMWA-1) (Polynucleobacter necessarius subsp. asymbioticus).